The following is a 309-amino-acid chain: Isoaspartyl peptidase/L-asparaginase (309 aa).

Thr-166 acts as the Nucleophile in catalysis. Substrate contacts are provided by residues 194-197 (RVGD) and 217-220 (TGHG).

Belongs to the Ntn-hydrolase family. In terms of assembly, heterodimer of an alpha and beta chain produced by autocleavage. Cleaved into an alpha and beta chain by autocatalysis; this activates the enzyme. The N-terminal residue of the beta subunit is responsible for the nucleophile hydrolase activity.

It localises to the cytoplasm. It carries out the reaction L-asparagine + H2O = L-aspartate + NH4(+). The catalysed reaction is Cleavage of a beta-linked Asp residue from the N-terminus of a polypeptide.. Its function is as follows. Has both L-asparaginase and beta-aspartyl peptidase activity. Does not have aspartylglucosaminidase activity and is inactive toward GlcNAc-L-Asn. Likewise, has no activity toward glutamine. The protein is Isoaspartyl peptidase/L-asparaginase (asrgl1) of Xenopus laevis (African clawed frog).